Here is a 342-residue protein sequence, read N- to C-terminus: Phenylalanine--tRNA ligase alpha subunit (342 aa).

Glutamate 257 is a Mg(2+) binding site.

This sequence belongs to the class-II aminoacyl-tRNA synthetase family. Phe-tRNA synthetase alpha subunit type 1 subfamily. In terms of assembly, tetramer of two alpha and two beta subunits. Mg(2+) serves as cofactor.

The protein localises to the cytoplasm. The enzyme catalyses tRNA(Phe) + L-phenylalanine + ATP = L-phenylalanyl-tRNA(Phe) + AMP + diphosphate + H(+). In Chlamydia trachomatis serovar A (strain ATCC VR-571B / DSM 19440 / HAR-13), this protein is Phenylalanine--tRNA ligase alpha subunit.